Here is a 128-residue protein sequence, read N- to C-terminus: Fluoride-specific ion channel FluC (128 aa).

The next 4 helical transmembrane spans lie at 8–28, 38–58, 71–91, and 103–123; these read IIFISSGAALGALSRWGLGLL, LGTLVANYLGCLIIGVFLAFF, FFVTGFLGSLTTFSTFSAEVI, and LMLASGHLLGCLLFTALGVFI. Na(+)-binding residues include Gly-78 and Thr-81.

It belongs to the fluoride channel Fluc/FEX (TC 1.A.43) family.

The protein resides in the cell inner membrane. It carries out the reaction fluoride(in) = fluoride(out). With respect to regulation, na(+) is not transported, but it plays an essential structural role and its presence is essential for fluoride channel function. Its function is as follows. Fluoride-specific ion channel. Important for reducing fluoride concentration in the cell, thus reducing its toxicity. In Pasteurella multocida (strain Pm70), this protein is Fluoride-specific ion channel FluC.